The chain runs to 541 residues: uncharacterized protein (541 aa).

Positions 1–22 (MQFKYGALIFSGFLGLSIVLAS) are cleaved as a signal peptide. Residue cysteine 23 is the site of N-palmitoyl cysteine attachment. Cysteine 23 carries S-diacylglycerol cysteine lipidation. Disordered stretches follow at residues 446–468 (APGQ…NGNL) and 480–514 (KTKT…TENQ). Over residues 448–460 (GQSSQKEGGQQQS) the composition is skewed to low complexity. Basic and acidic residues predominate over residues 480 to 490 (KTKTEVKKTED).

Belongs to the MG185/MG260 family.

The protein resides in the cell membrane. This is an uncharacterized protein from Mycoplasma pneumoniae (strain ATCC 29342 / M129 / Subtype 1) (Mycoplasmoides pneumoniae).